We begin with the raw amino-acid sequence, 355 residues long: Uroporphyrinogen decarboxylase (355 aa).

Substrate contacts are provided by residues 27 to 31 (RQAGR), Asp77, Tyr154, Thr209, and His328.

This sequence belongs to the uroporphyrinogen decarboxylase family. As to quaternary structure, homodimer.

The protein localises to the cytoplasm. It carries out the reaction uroporphyrinogen III + 4 H(+) = coproporphyrinogen III + 4 CO2. It functions in the pathway porphyrin-containing compound metabolism; protoporphyrin-IX biosynthesis; coproporphyrinogen-III from 5-aminolevulinate: step 4/4. Functionally, catalyzes the decarboxylation of four acetate groups of uroporphyrinogen-III to yield coproporphyrinogen-III. The polypeptide is Uroporphyrinogen decarboxylase (Vibrio campbellii (strain ATCC BAA-1116)).